A 180-amino-acid polypeptide reads, in one-letter code: ATP-dependent protease subunit HslV (180 aa).

Threonine 7 is an active-site residue. 3 residues coordinate Na(+): glycine 165, cysteine 168, and threonine 171.

This sequence belongs to the peptidase T1B family. HslV subfamily. In terms of assembly, a double ring-shaped homohexamer of HslV is capped on each side by a ring-shaped HslU homohexamer. The assembly of the HslU/HslV complex is dependent on binding of ATP.

It localises to the cytoplasm. It catalyses the reaction ATP-dependent cleavage of peptide bonds with broad specificity.. Its activity is regulated as follows. Allosterically activated by HslU binding. Its function is as follows. Protease subunit of a proteasome-like degradation complex believed to be a general protein degrading machinery. The chain is ATP-dependent protease subunit HslV from Bacillus anthracis (strain A0248).